Reading from the N-terminus, the 61-residue chain is Small ribosomal subunit protein uS14 (61 aa).

Residues Cys-24, Cys-27, Cys-40, and Cys-43 each coordinate Zn(2+).

Belongs to the universal ribosomal protein uS14 family. Zinc-binding uS14 subfamily. Part of the 30S ribosomal subunit. Contacts proteins S3 and S10. The cofactor is Zn(2+).

Functionally, binds 16S rRNA, required for the assembly of 30S particles and may also be responsible for determining the conformation of the 16S rRNA at the A site. The polypeptide is Small ribosomal subunit protein uS14 (Limosilactobacillus fermentum (strain NBRC 3956 / LMG 18251) (Lactobacillus fermentum)).